We begin with the raw amino-acid sequence, 461 residues long: UDP-glycosyltransferase 88B1 (461 aa).

UDP-alpha-D-glucose contacts are provided by residues Ser278, 340-341 (WA), 358-366 (HCGWNSSLE), and 380-383 (YAEQ).

It belongs to the UDP-glycosyltransferase family.

In terms of biological role, may glycosylate diterpenes or flavonols in leaves. This is UDP-glycosyltransferase 88B1 from Stevia rebaudiana (Stevia).